We begin with the raw amino-acid sequence, 301 residues long: 4-diphosphocytidyl-2-C-methyl-D-erythritol kinase (301 aa).

The active site involves lysine 10. 96–106 provides a ligand contact to ATP; that stretch reads PMGGGVGGGSS. The active site involves aspartate 138.

It belongs to the GHMP kinase family. IspE subfamily.

The enzyme catalyses 4-CDP-2-C-methyl-D-erythritol + ATP = 4-CDP-2-C-methyl-D-erythritol 2-phosphate + ADP + H(+). The protein operates within isoprenoid biosynthesis; isopentenyl diphosphate biosynthesis via DXP pathway; isopentenyl diphosphate from 1-deoxy-D-xylulose 5-phosphate: step 3/6. In terms of biological role, catalyzes the phosphorylation of the position 2 hydroxy group of 4-diphosphocytidyl-2C-methyl-D-erythritol. The protein is 4-diphosphocytidyl-2-C-methyl-D-erythritol kinase of Alcanivorax borkumensis (strain ATCC 700651 / DSM 11573 / NCIMB 13689 / SK2).